We begin with the raw amino-acid sequence, 118 residues long: Mitochondrial protein YPR099C (118 aa).

It localises to the mitochondrion. Essential for the functional mitochondria and respiratory growth. The sequence is that of Mitochondrial protein YPR099C from Saccharomyces cerevisiae (strain ATCC 204508 / S288c) (Baker's yeast).